Consider the following 279-residue polypeptide: Tryptophan synthase alpha chain (279 aa).

Active-site proton acceptor residues include E50 and D61.

Belongs to the TrpA family. In terms of assembly, tetramer of two alpha and two beta chains.

It carries out the reaction (1S,2R)-1-C-(indol-3-yl)glycerol 3-phosphate + L-serine = D-glyceraldehyde 3-phosphate + L-tryptophan + H2O. It participates in amino-acid biosynthesis; L-tryptophan biosynthesis; L-tryptophan from chorismate: step 5/5. Its function is as follows. The alpha subunit is responsible for the aldol cleavage of indoleglycerol phosphate to indole and glyceraldehyde 3-phosphate. This chain is Tryptophan synthase alpha chain, found in Brucella suis (strain ATCC 23445 / NCTC 10510).